We begin with the raw amino-acid sequence, 71 residues long: Small ribosomal subunit protein bS18 (71 aa).

The protein belongs to the bacterial ribosomal protein bS18 family. As to quaternary structure, part of the 30S ribosomal subunit. Forms a tight heterodimer with protein bS6.

Functionally, binds as a heterodimer with protein bS6 to the central domain of the 16S rRNA, where it helps stabilize the platform of the 30S subunit. The chain is Small ribosomal subunit protein bS18 from Synechocystis sp. (strain ATCC 27184 / PCC 6803 / Kazusa).